Here is a 2481-residue protein sequence, read N- to C-terminus: Serine/threonine-protein kinase TOR (2481 aa).

The tract at residues 1–31 (MSTSSQSFVAGRPASMASPSQSHRFCGPSAT) is disordered. 8 HEAT repeats span residues 205 to 242 (VHVP…VIEK), 292 to 329 (SRYR…FLRD), 373 to 410 (HYLP…AMGS), 434 to 471 (DALD…SQAK), 569 to 607 (RLVE…FDDY), 608 to 645 (LAQA…KNPA), 737 to 775 (QYIP…STGY), and 781 to 819 (KEYP…LDPH). The interval 823 to 847 (RNQQSLSGSHGEVPRGTGDSGQPIP) is disordered. HEAT repeat units lie at residues 866–904 (YYST…SMGL), 908–945 (PYLP…IVRQ), 952–992 (PELL…ALND), 996–1036 (TYLP…GTLD), 1037–1075 (EHMH…CVQV), and 1077–1114 (GHIS…ALGE). A disordered region spans residues 1179-1204 (DPFEEGTDRNHQVNDGRLRTAGEASQ). The segment covering 1184-1198 (GTDRNHQVNDGRLRT) has biased composition (basic and acidic residues). The FAT domain occupies 1309–1887 (LLGALAEKCR…MYPLLVACKS (579 aa)). Short sequence motifs (nuclear localization signal) lie at residues 1505–1512 (VRRAKYDE) and 2075–2080 (KQRPRK). A PI3K/PI4K catalytic domain is found at 2065-2378 (FSRQLVVITS…DEDPADIDLP (314 aa)). Positions 2071–2077 (VITSKQR) are G-loop. The tract at residues 2244-2252 (GLGDRHPSN) is catalytic loop. An activation loop region spans residues 2264-2289 (HIDFGDCFEASMNREKFPEKVPFRLT). Residues 2354-2384 (NNNPNAPADVEPDEEDEDPADIDLPQPQRST) form a disordered region. A compositionally biased stretch (acidic residues) spans 2363-2374 (VEPDEEDEDPAD). Phosphoserine is present on S2424. Residues 2449 to 2481 (HGLSVKVQVQKLINQATSHENLCQNYVGWCPFW) form the FATC domain.

Belongs to the PI3/PI4-kinase family. Interacts with RAPTOR1 and itself. Interacts with FKBP12 in a rapamycin-dependent manner. Binds to LST8-1. Hyperactivated upon interaction with cauliflower mosaic virus (CaMV) Tav protein. In terms of processing, activated by phosphorylation on Ser-2424 triggered by cauliflower mosaic virus P6 and auxin. In terms of tissue distribution, highly expressed in root meristems, shoot apical meristem (SAM) and floral buds.

It localises to the cytoplasm. It is found in the nucleus. It catalyses the reaction L-seryl-[protein] + ATP = O-phospho-L-seryl-[protein] + ADP + H(+). The enzyme catalyses L-threonyl-[protein] + ATP = O-phospho-L-threonyl-[protein] + ADP + H(+). Its activity is regulated as follows. Almost insensitive to rapamycin. Strongly repressed by specific active site inhibitors (asTORis) such as AZD-8055, TORIN2 and WYE-132, and, to a lesser extent, by KU63794, WYE-354 and TORIN1, leading to impaired photoautotrophic growth and abnormally early meristematic cells differentiation. Repression by TORIN1 leads to impaired responses to auxin, including gravitropism. Combined treatment with rapamycin and active-site inhibitors (e.g. Torin1 and AZD-8055) results in synergistic inhibition of activity and plant growth. Inhibition by KU63794 leads to reduced auxin content in root tips. AZD-8055 treatment reduces abscisic acid (ABA) levels. In addition, inhibition by AZD-8055 leads to a strong reduction of watermelon mosaic virus (WMV) infection. Essential cell growth regulator that controls development from early embryo to seed production. Controls plant growth in environmental stress conditions. Acts through the phosphorylation of downstream effectors that are recruited by the binding partner RAPTOR. Acts by activating transcription, protein synthesis and ribosome biogenesis, and inhibiting mRNA degradation and autophagy. Can phosphorylate TAP46, a regulatory subunit of protein phosphatase 2A that modulates cell growth and survival. Involved in modulating the transition from heterotrophic to photoautotrophic growth by regulating the expression of chloroplast- and photosynthesis-associated genes. Essential for auxin signaling transduction, probably acting in polysomes to maintain the active ATPK1/S6K1 (and thus TIF3H1/eIF3h) phosphorylation status that is critical for translation reinitiation (e.g. uORF-mRNAs loading). Promotes abscisic acid (ABA) biosynthesis. Involved in the regulation of sugar-mediated (e.g. glucose and sucrose) glycolysis- and mitochondrial bioenergetics-dependent root growth promotion. Required for sugar (e.g. glucose) promotion of hypocotyl elongation in the dark, by activating the brassinosteroid pathway and stabilizing BZR1. The regulation of BZR1 degradation is dependent on autophagy. Regulates the expression, phosphorylation and ribosome association of MRFs (e.g. MRF1, MRF3 and MRF4), especially under energy-deficient conditions. Functionally, (Microbial infection) Binding to cauliflower mosaic virus (CaMV) Tav protein is critical for both translation reinitiation and viral fitness. When activated by CaMV P6, promotes CaMV translation by inhibiting cellular autophagy and suppressing both silencing and innate immunity, thus conferring sensitivity to P.syringae. Its function is as follows. (Microbial infection) Required during infection by some potyvirus such as Watermelon mosaic virus (WMV) but not for turnip mosaic virus (TuMV). The polypeptide is Serine/threonine-protein kinase TOR (Arabidopsis thaliana (Mouse-ear cress)).